An 847-amino-acid chain; its full sequence is Glucans biosynthesis glucosyltransferase H (847 aa).

At 1-138 (MNKTTEYIDA…KWRTVGTIRR (138 aa)) the chain is on the cytoplasmic side. A helical transmembrane segment spans residues 139–156 (YILLILTLAQTVVATWYM). Residues 157–193 (KTILPYQGWALINPMDMVGQDIWVSFMQLLPYMLQTG) are Periplasmic-facing. The chain crosses the membrane as a helical span at residues 194–216 (ILILFAVLFCWVSAGFWTALMGF). At 217–511 (LQLLIGRDKY…LVKGMHPVHR (295 aa)) the chain is on the cytoplasmic side. A helical transmembrane segment spans residues 512–534 (AVFLTGVMSYLSAPLWFMFLALS). The Periplasmic segment spans residues 535–567 (TALQVVHALTEPQYFLQPRQLFPVWPQWRPELA). Residues 568 to 590 (IALFASTMVLLFLPKLLSIMLIW) form a helical membrane-spanning segment. Topologically, residues 591–602 (CKGTKEYGGFWR) are cytoplasmic. The chain crosses the membrane as a helical span at residues 603–625 (VTLSLLLEVLFSVLLAPVRMLFH). The Periplasmic portion of the chain corresponds to 626 to 679 (TVFVVSAFLGWEVVWNSPQRDDDSTPWGEAFMRHGSQLLLGLVWAVGMAWLDLR). Residues 680 to 702 (FLFWLAPIVFSLILSPFVSVISS) traverse the membrane as a helical segment. Topologically, residues 703-847 (RSTVGLRTKR…ALQGRTSSAG (145 aa)) are cytoplasmic.

Belongs to the glycosyltransferase 2 family. OpgH subfamily.

It localises to the cell inner membrane. It functions in the pathway glycan metabolism; osmoregulated periplasmic glucan (OPG) biosynthesis. In terms of biological role, involved in the biosynthesis of osmoregulated periplasmic glucans (OPGs). The chain is Glucans biosynthesis glucosyltransferase H from Salmonella typhi.